Reading from the N-terminus, the 534-residue chain is Protein tweety homolog 2 (534 aa).

The Extracellular portion of the chain corresponds to 1–44 (MATARVEYIAPWWVYWLHNLPHVDFSLQRESGDFNPKDPGYQQT). The chain crosses the membrane as a helical span at residues 45–65 (LLFVALFIALCAAVNLLFVSG). Over 66–87 (YLICLCCCKKEDETETKMTSSC) the chain is Cytoplasmic. Residues 88–108 (CVTWTAAVSGLLCCAAVGIGF) form a helical membrane-spanning segment. Topologically, residues 109–213 (YGNSETNDGV…NASIIEYYRW (105 aa)) are extracellular. Ca(2+) contacts are provided by glutamate 113 and aspartate 116. A glycan (N-linked (GlcNAc...) asparagine) is linked at asparagine 129. The RGD signature appears at 164–166 (RGD). N-linked (GlcNAc...) asparagine glycans are attached at residues asparagine 197 and asparagine 204. The helical transmembrane segment at 214 to 234 (LSYLILFITDVVICLVTCLGL) threads the bilayer. The Cytoplasmic segment spans residues 235-240 (AKKSKC). Residues 241 to 261 (LLLTMLCCGLIALMLSWASLA) traverse the membrane as a helical segment. The Extracellular segment spans residues 262–388 (LETSSAVGTS…IGICYDGVEG (127 aa)). 2 disulfide bridges follow: cysteine 274/cysteine 382 and cysteine 300/cysteine 367. Asparagine 352 carries an N-linked (GlcNAc...) asparagine glycan. Residues 389 to 409 (LLYLSLFSLLAAVAFTAMVCA) traverse the membrane as a helical segment. Residues 410–534 (MPRAWKHLAA…PNIYSNVFPA (125 aa)) lie on the Cytoplasmic side of the membrane.

The protein belongs to the tweety family. In terms of assembly, forms cis-homodimers in the presence of Ca(+2) and forms monomers and trans-dimers in the absence of Ca(2+).

Its subcellular location is the cell membrane. It catalyses the reaction chloride(in) = chloride(out). The catalysed reaction is L-glutamate(out) = L-glutamate(in). Its function is as follows. May act as a calcium-independent, swelling-dependent volume-regulated anion channel (VRAC-swell) which plays a pivotal role in the process of regulatory volume decrease (RVD) in the brain through the efflux of anions like chloride and organic osmolytes like glutamate. Probable large-conductance Ca(2+)-activated chloride channel. This is Protein tweety homolog 2 (ttyh2) from Xenopus laevis (African clawed frog).